The following is an 858-amino-acid chain: DNA mismatch repair protein MutS (858 aa).

Position 603–610 (603–610) interacts with ATP; the sequence is GPNMSGKS.

The protein belongs to the DNA mismatch repair MutS family.

This protein is involved in the repair of mismatches in DNA. It is possible that it carries out the mismatch recognition step. This protein has a weak ATPase activity. The sequence is that of DNA mismatch repair protein MutS from Streptococcus agalactiae serotype Ia (strain ATCC 27591 / A909 / CDC SS700).